The primary structure comprises 145 residues: Protein phosphatase 1 regulatory subunit 14D (145 aa).

Positions methionine 1–proline 14 are enriched in low complexity. The tract at residues methionine 1–valine 59 is disordered. The interaction with protein phosphatase 1 stretch occupies residues lysine 21–tryptophan 25. Residues lysine 21–threonine 32 show a composition bias toward basic residues. Residues serine 37–lysine 47 show a composition bias toward basic and acidic residues. Threonine 58 carries the phosphothreonine modification.

The protein belongs to the PP1 inhibitor family. In terms of processing, phosphorylated on several residues. As to expression, detected in colon, intestine, kidney and brain cortex.

The protein localises to the cytoplasm. Functionally, inhibitor of PPP1CA. Has inhibitory activity only when phosphorylated, creating a molecular switch for regulating the phosphorylation status of PPP1CA substrates and smooth muscle contraction. The chain is Protein phosphatase 1 regulatory subunit 14D (PPP1R14D) from Homo sapiens (Human).